Consider the following 135-residue polypeptide: MPTIAQLIRRERGIAQRKTKSPALKACPQRRGVCTRVYTTTPKKPNSALRKVARVRLTSGFEVTAYIPGVGHNLQEHSVVMIRGGRVKDLPGVRYHIIRGTLDTAGVKNRMQSRSKYGTKRPKPGQAAAPAGKKR.

Residue Asp89 is modified to 3-methylthioaspartic acid. Residues 103 to 135 (DTAGVKNRMQSRSKYGTKRPKPGQAAAPAGKKR) form a disordered region. A compositionally biased stretch (basic residues) spans 111 to 123 (MQSRSKYGTKRPK). Low complexity predominate over residues 124–135 (PGQAAAPAGKKR).

Belongs to the universal ribosomal protein uS12 family. In terms of assembly, part of the 30S ribosomal subunit. Contacts proteins S8 and S17. May interact with IF1 in the 30S initiation complex.

In terms of biological role, with S4 and S5 plays an important role in translational accuracy. Interacts with and stabilizes bases of the 16S rRNA that are involved in tRNA selection in the A site and with the mRNA backbone. Located at the interface of the 30S and 50S subunits, it traverses the body of the 30S subunit contacting proteins on the other side and probably holding the rRNA structure together. The combined cluster of proteins S8, S12 and S17 appears to hold together the shoulder and platform of the 30S subunit. This Gloeobacter violaceus (strain ATCC 29082 / PCC 7421) protein is Small ribosomal subunit protein uS12.